Reading from the N-terminus, the 2554-residue chain is DnaJ homolog subfamily C GRV2 (2554 aa).

Disordered regions lie at residues 746–766 and 810–833; these read DVVD…KRLL and QRRA…GVDS. Over residues 815 to 825 the composition is skewed to polar residues; that stretch reads DSSSEASNPQA. 2 coiled-coil regions span residues 925-951 and 1518-1546; these read TRQE…EDIS and RTAS…LKRQ. The region spanning 1524-1606 is the J domain; the sequence is LNEEISNISK…AQCILYRRYG (83 aa). Disordered regions lie at residues 1960–1994 and 2339–2366; these read IEDR…SSEG and SGEV…GQTP. Residues 1966-1977 show a composition bias toward polar residues; the sequence is SNDTPELQSSVA. The span at 1982 to 1994 shows a compositional bias: basic and acidic residues; that stretch reads IEEHSDHQPSSEG. Residues 2352-2366 show a composition bias toward polar residues; the sequence is VNESTDPSSLPGQTP.

As to expression, constitutively expressed in roots, hypocotyls, leaves (e.g. vascular tissues), stems, flowers (e.g. petals and stigmas), siliques and pollen.

The protein localises to the endosome membrane. In terms of biological role, required for endosome formation, vacuolar protein sorting and determination of the embryo growth axis. Necessary for the transport of proteins into protein storage vacuoles (PSVs). Participates in vesicle trafficking from the endosome to the central vacuole. Involved in the regulation of shoot phototropism and gravitropism, probably through the positioning of specialized amyloplasts (statoliths) in endodermal cells. The polypeptide is DnaJ homolog subfamily C GRV2 (GRV2) (Arabidopsis thaliana (Mouse-ear cress)).